We begin with the raw amino-acid sequence, 335 residues long: Probable magnesium transporter NIPA1 (335 aa).

Over 1-7 (MDQMSPD) the chain is Extracellular. The chain crosses the membrane as a helical span at residues 8–28 (NINGVILAVSSSIFIGSSFII). The Cytoplasmic portion of the chain corresponds to 29–55 (KKKGLKKAGASGVRAGEGGYGYLKEPW). Residues 56-76 (WWAGMITMIVGEVANFAAYAF) form a helical membrane-spanning segment. Over 77–79 (APA) the chain is Extracellular. Residues 80 to 100 (ILVTPLGALSIIFSAVLAHFI) traverse the membrane as a helical segment. The Cytoplasmic portion of the chain corresponds to 101–104 (LKEK). A helical membrane pass occupies residues 105 to 125 (LHMFGILGCILCVVGSTTIVL). Residues 126 to 143 (HAPHEQKIESVKQIWQLA) lie on the Extracellular side of the membrane. The helical transmembrane segment at 144-164 (IEPGFLVYSAVIVIVVAILIF) threads the bilayer. Residues 165–179 (YYEPRYGKTHMIVYV) are Cytoplasmic-facing. The chain crosses the membrane as a helical span at residues 180–200 (GICSLMGSLTVMSVKAVAIAI). Residues 201–212 (KLTFSGTNQFKY) lie on the Extracellular side of the membrane. The helical transmembrane segment at 213–233 (FNTWIFILVVATCCILQINYL) threads the bilayer. At 234–244 (NKALDTFNTAV) the chain is on the cytoplasmic side. A helical transmembrane segment spans residues 245-265 (ISPVYYVMFTTFTIIASMIMF). Residues 266 to 272 (KDWASQS) lie on the Extracellular side of the membrane. The helical transmembrane segment at 273–293 (GLKIATELCGFVTILSGTFLL) threads the bilayer. Over 294–335 (HKTKDMGNSASGRGSISMPTRDTPVFTNSGSGRSSSSDKVAS) the chain is Cytoplasmic. Residues 303 to 321 (ASGRGSISMPTRDTPVFTN) are compositionally biased toward polar residues. The segment at 303-335 (ASGRGSISMPTRDTPVFTNSGSGRSSSSDKVAS) is disordered. Over residues 322 to 335 (SGSGRSSSSDKVAS) the composition is skewed to low complexity.

This sequence belongs to the NIPA (TC 2.A.7) family. As to quaternary structure, homodimer.

The protein localises to the cell membrane. It is found in the early endosome. In terms of biological role, acts as a Mg(2+) transporter. Can also transport other divalent cations such as Fe(2+), Sr(2+), Ba(2+), Mn(2+) and Co(2+) but to a much less extent than Mg(2+). The protein is Probable magnesium transporter NIPA1 of Arabidopsis thaliana (Mouse-ear cress).